The primary structure comprises 237 residues: Ribosomal RNA small subunit methyltransferase G (237 aa).

S-adenosyl-L-methionine-binding positions include Gly78, Phe83, 129–130, and Arg148; that span reads AE. The interval 218–237 is disordered; the sequence is KKETPRKYPRKAGTPNKKPL.

Belongs to the methyltransferase superfamily. RNA methyltransferase RsmG family.

It localises to the cytoplasm. Functionally, specifically methylates the N7 position of a guanine in 16S rRNA. This is Ribosomal RNA small subunit methyltransferase G from Streptococcus uberis (strain ATCC BAA-854 / 0140J).